The following is a 231-amino-acid chain: Sugar fermentation stimulation protein homolog (231 aa).

This sequence belongs to the SfsA family.

The polypeptide is Sugar fermentation stimulation protein homolog (Syntrophotalea carbinolica (strain DSM 2380 / NBRC 103641 / GraBd1) (Pelobacter carbinolicus)).